The primary structure comprises 185 residues: Hypoxanthine/guanine phosphoribosyltransferase (185 aa).

Belongs to the purine/pyrimidine phosphoribosyltransferase family. Archaeal HPRT subfamily. Homodimer.

Its subcellular location is the cytoplasm. It carries out the reaction IMP + diphosphate = hypoxanthine + 5-phospho-alpha-D-ribose 1-diphosphate. The catalysed reaction is GMP + diphosphate = guanine + 5-phospho-alpha-D-ribose 1-diphosphate. It participates in purine metabolism; IMP biosynthesis via salvage pathway; IMP from hypoxanthine: step 1/1. Functionally, catalyzes a salvage reaction resulting in the formation of IMP that is energically less costly than de novo synthesis. The chain is Hypoxanthine/guanine phosphoribosyltransferase from Methanococcus vannielii (strain ATCC 35089 / DSM 1224 / JCM 13029 / OCM 148 / SB).